A 322-amino-acid polypeptide reads, in one-letter code: Quinolinate synthase (322 aa).

Iminosuccinate contacts are provided by His-38 and Ser-55. Cys-100 contributes to the [4Fe-4S] cluster binding site. Iminosuccinate contacts are provided by residues 126 to 128 (YIN) and Ser-143. A [4Fe-4S] cluster-binding site is contributed by Cys-186. Residues 212 to 214 (HPE) and Thr-229 contribute to the iminosuccinate site. [4Fe-4S] cluster is bound at residue Cys-279.

It belongs to the quinolinate synthase family. Type 2 subfamily. [4Fe-4S] cluster is required as a cofactor.

Its subcellular location is the cytoplasm. The catalysed reaction is iminosuccinate + dihydroxyacetone phosphate = quinolinate + phosphate + 2 H2O + H(+). Its pathway is cofactor biosynthesis; NAD(+) biosynthesis; quinolinate from iminoaspartate: step 1/1. Its function is as follows. Catalyzes the condensation of iminoaspartate with dihydroxyacetone phosphate to form quinolinate. The sequence is that of Quinolinate synthase from Aquifex aeolicus (strain VF5).